Reading from the N-terminus, the 124-residue chain is ATP synthase epsilon chain (124 aa).

This sequence belongs to the ATPase epsilon chain family. As to quaternary structure, F-type ATPases have 2 components, CF(1) - the catalytic core - and CF(0) - the membrane proton channel. CF(1) has five subunits: alpha(3), beta(3), gamma(1), delta(1), epsilon(1). CF(0) has three main subunits: a, b and c.

Its subcellular location is the cell membrane. Its function is as follows. Produces ATP from ADP in the presence of a proton gradient across the membrane. This chain is ATP synthase epsilon chain, found in Corynebacterium efficiens (strain DSM 44549 / YS-314 / AJ 12310 / JCM 11189 / NBRC 100395).